The chain runs to 199 residues: Probable thymidylate kinase (199 aa).

9-16 (GIDGCGKT) serves as a coordination point for ATP.

It belongs to the thymidylate kinase family.

The enzyme catalyses dTMP + ATP = dTDP + ADP. This is Probable thymidylate kinase from Methanococcus maripaludis (strain C6 / ATCC BAA-1332).